The primary structure comprises 156 residues: Ribosomal RNA large subunit methyltransferase H (156 aa).

S-adenosyl-L-methionine is bound by residues Leu73, Gly104, and 123–128 (LSALTL).

Belongs to the RNA methyltransferase RlmH family. In terms of assembly, homodimer.

The protein resides in the cytoplasm. It carries out the reaction pseudouridine(1915) in 23S rRNA + S-adenosyl-L-methionine = N(3)-methylpseudouridine(1915) in 23S rRNA + S-adenosyl-L-homocysteine + H(+). Functionally, specifically methylates the pseudouridine at position 1915 (m3Psi1915) in 23S rRNA. The sequence is that of Ribosomal RNA large subunit methyltransferase H from Shewanella putrefaciens (strain CN-32 / ATCC BAA-453).